The primary structure comprises 522 residues: Glutamate--cysteine ligase (522 aa).

Belongs to the glutamate--cysteine ligase type 1 family. Type 1 subfamily.

The catalysed reaction is L-cysteine + L-glutamate + ATP = gamma-L-glutamyl-L-cysteine + ADP + phosphate + H(+). The protein operates within sulfur metabolism; glutathione biosynthesis; glutathione from L-cysteine and L-glutamate: step 1/2. In Vibrio parahaemolyticus serotype O3:K6 (strain RIMD 2210633), this protein is Glutamate--cysteine ligase.